A 153-amino-acid chain; its full sequence is 6,7-dimethyl-8-ribityllumazine synthase (153 aa).

Residues F22, 56 to 58 (AFE), and 80 to 82 (AVI) each bind 5-amino-6-(D-ribitylamino)uracil. Position 85 to 86 (85 to 86 (AT)) interacts with (2S)-2-hydroxy-3-oxobutyl phosphate. Residue H88 is the Proton donor of the active site. F113 is a 5-amino-6-(D-ribitylamino)uracil binding site. R127 is a binding site for (2S)-2-hydroxy-3-oxobutyl phosphate.

It belongs to the DMRL synthase family.

The catalysed reaction is (2S)-2-hydroxy-3-oxobutyl phosphate + 5-amino-6-(D-ribitylamino)uracil = 6,7-dimethyl-8-(1-D-ribityl)lumazine + phosphate + 2 H2O + H(+). It participates in cofactor biosynthesis; riboflavin biosynthesis; riboflavin from 2-hydroxy-3-oxobutyl phosphate and 5-amino-6-(D-ribitylamino)uracil: step 1/2. Its function is as follows. Catalyzes the formation of 6,7-dimethyl-8-ribityllumazine by condensation of 5-amino-6-(D-ribitylamino)uracil with 3,4-dihydroxy-2-butanone 4-phosphate. This is the penultimate step in the biosynthesis of riboflavin. The polypeptide is 6,7-dimethyl-8-ribityllumazine synthase (Clostridium tetani (strain Massachusetts / E88)).